We begin with the raw amino-acid sequence, 615 residues long: DNA mismatch repair protein MutL (615 aa).

The segment at 363-397 (FAEPAAREPVAPRYTPAPASGSRPAAPWPNAQPGY) is disordered. Residues 364–391 (AEPAAREPVAPRYTPAPASGSRPAAPWP) are compositionally biased toward low complexity.

The protein belongs to the DNA mismatch repair MutL/HexB family.

Its function is as follows. This protein is involved in the repair of mismatches in DNA. It is required for dam-dependent methyl-directed DNA mismatch repair. May act as a 'molecular matchmaker', a protein that promotes the formation of a stable complex between two or more DNA-binding proteins in an ATP-dependent manner without itself being part of a final effector complex. The protein is DNA mismatch repair protein MutL of Escherichia coli (strain K12 / MC4100 / BW2952).